A 298-amino-acid polypeptide reads, in one-letter code: MENFQKVEKIGEGTYGVVYKARNKLTGEVVALKKIRLDTETEGVPSTAIREISLLKELNHPNIVKLLDVIHTENKLYLVFEFLHQDLKKFMDASALTGIPLPLIKSYLFQLLQGLAFCHSHRVLHRDLKPQNLLINTEGAIKLADFGLARAFGVPVRTYTHEVVTLWYRAPEILLGCKYYSTAVDIWSLGCIFAEMVTRRALFPGDSEIDQLFRIFRTLGTPDEVVWPGVTSMPDYKPSFPKWARQDFSKVVPPLDEDGRSLLSQMLHYDPNKRISAKAALAHPFFQDVTKPVPHLRL.

The residue at position 1 (methionine 1) is an N-acetylmethionine. The Protein kinase domain maps to 4–286 (FQKVEKIGEG…AKAALAHPFF (283 aa)). Lysine 6 carries the N6-acetyllysine modification. Residue 10–18 (IGEGTYGVV) coordinates ATP. Threonine 14 carries the phosphothreonine modification. Tyrosine 15 carries the post-translational modification Phosphotyrosine; by WEE1. Tyrosine 19 carries the post-translational modification Phosphotyrosine. ATP contacts are provided by residues lysine 33, 81-83 (EFL), and aspartate 86. The Proton acceptor role is filled by aspartate 127. Residues 129–132 (KPQN) and aspartate 145 each bind ATP. Mg(2+) contacts are provided by asparagine 132 and aspartate 145. At threonine 160 the chain carries Phosphothreonine; by CAK and CCRK.

The protein belongs to the protein kinase superfamily. CMGC Ser/Thr protein kinase family. CDC2/CDKX subfamily. Found in a complex with CABLES1, CCNA1 and CCNE1. Interacts with CABLES1. Interacts with UHRF2. Part of a complex consisting of UHRF2, CDK2 and CCNE1. Interacts with the Speedy/Ringo proteins SPDYA and SPDYC. Interaction with SPDYA promotes kinase activation via a conformation change that alleviates obstruction of the substrate-binding cleft by the T-loop. Found in a complex with both SPDYA and CDKN1B/KIP1. Binds to RB1 and CDK7. Binding to CDKN1A (p21) leads to CDK2/cyclin E inactivation at the G1-S phase DNA damage checkpoint, thereby arresting cells at the G1-S transition during DNA repair. Associated with PTPN6 and beta-catenin/CTNNB1. Interacts with CACUL1. May interact with CEP63. Interacts with ANKRD17. Interacts with CEBPA (when phosphorylated). Forms a ternary complex with CCNA2 and CDKN1B; CDKN1B inhibits the kinase activity of CDK2 through conformational rearrangements. Interacts with cyclins A, B1, B3, D, or E. Interacts with CDK2AP2. Mg(2+) is required as a cofactor. In terms of processing, phosphorylated at Thr-160 by CDK7 in a CAK complex. Phosphorylation at Thr-160 promotes kinase activity, whereas phosphorylation at Tyr-15 by WEE1 reduces slightly kinase activity. Phosphorylated on Thr-14 and Tyr-15 during S and G2 phases before being dephosphorylated by CDC25A. Nitrosylated after treatment with nitric oxide (DETA-NO).

It is found in the cytoplasm. Its subcellular location is the cytoskeleton. The protein resides in the microtubule organizing center. It localises to the centrosome. The protein localises to the nucleus. It is found in the cajal body. Its subcellular location is the endosome. The enzyme catalyses L-seryl-[protein] + ATP = O-phospho-L-seryl-[protein] + ADP + H(+). The catalysed reaction is L-threonyl-[protein] + ATP = O-phospho-L-threonyl-[protein] + ADP + H(+). Phosphorylation at Thr-14 or Tyr-15 inactivates the enzyme, while phosphorylation at Thr-160 activates it. Inhibited by 1,25-dihydroxyvitamin D(3) (1,25-(OH)(2)D(3)), AG-024322, N-(4-Piperidinyl)-4-(2,6-dichlorobenzoylamino)-1H-pyrazole-3-carboxamide (AT7519), R547 (Ro-4584820), purine, pyrimidine and pyridine derivatives, 2-aminopyrimidines, paullones, thiazo derivatives, macrocyclic quinoxalin-2-one, pyrazolo[1,5-a]-1,3,5-triazine, pyrazolo[1,5-a]pyrimidine, 2-(1-ethyl-2-hydroxyethylamino)-6-benzylamino-9-isopropylpurine (roscovitine, seliciclib and CYC202), SNS-032 (BMS-387032), triazolo[1,5-a]pyrimidines, staurosporine and olomoucine. Stimulated by MYC. Inactivated by CDKN1A (p21). Serine/threonine-protein kinase involved in the control of the cell cycle; essential for meiosis, but dispensable for mitosis. Phosphorylates CABLES1, CTNNB1, CDK2AP2, ERCC6, NBN, USP37, p53/TP53, NPM1, CDK7, RB1, BRCA2, MYC, NPAT, EZH2. Triggers duplication of centrosomes and DNA. Acts at the G1-S transition to promote the E2F transcriptional program and the initiation of DNA synthesis, and modulates G2 progression; controls the timing of entry into mitosis/meiosis by controlling the subsequent activation of cyclin B/CDK1 by phosphorylation, and coordinates the activation of cyclin B/CDK1 at the centrosome and in the nucleus. Crucial role in orchestrating a fine balance between cellular proliferation, cell death, and DNA repair in embryonic stem cells (ESCs). Activity of CDK2 is maximal during S phase and G2; activated by interaction with cyclin E during the early stages of DNA synthesis to permit G1-S transition, and subsequently activated by cyclin A2 (cyclin A1 in germ cells) during the late stages of DNA replication to drive the transition from S phase to mitosis, the G2 phase. EZH2 phosphorylation promotes H3K27me3 maintenance and epigenetic gene silencing. Cyclin E/CDK2 prevents oxidative stress-mediated Ras-induced senescence by phosphorylating MYC. Involved in G1-S phase DNA damage checkpoint that prevents cells with damaged DNA from initiating mitosis; regulates homologous recombination-dependent repair by phosphorylating BRCA2, this phosphorylation is low in S phase when recombination is active, but increases as cells progress towards mitosis. In response to DNA damage, double-strand break repair by homologous recombination a reduction of CDK2-mediated BRCA2 phosphorylation. Involved in regulation of telomere repair by mediating phosphorylation of NBN. Phosphorylation of RB1 disturbs its interaction with E2F1. NPM1 phosphorylation by cyclin E/CDK2 promotes its dissociates from unduplicated centrosomes, thus initiating centrosome duplication. Cyclin E/CDK2-mediated phosphorylation of NPAT at G1-S transition and until prophase stimulates the NPAT-mediated activation of histone gene transcription during S phase. Required for vitamin D-mediated growth inhibition by being itself inactivated. Involved in the nitric oxide- (NO) mediated signaling in a nitrosylation/activation-dependent manner. USP37 is activated by phosphorylation and thus triggers G1-S transition. CTNNB1 phosphorylation regulates insulin internalization. Phosphorylates FOXP3 and negatively regulates its transcriptional activity and protein stability. Phosphorylates ERCC6 which is essential for its chromatin remodeling activity at DNA double-strand breaks. Acts as a regulator of the phosphatidylinositol 3-kinase/protein kinase B signal transduction by mediating phosphorylation of the C-terminus of protein kinase B (PKB/AKT1 and PKB/AKT2), promoting its activation. This is Cyclin-dependent kinase 2 (CDK2) from Homo sapiens (Human).